A 284-amino-acid chain; its full sequence is F-box only protein 6 (284 aa).

Positions 1–48 (MVNINELPENILLELFTHVPAPQLLRNCRLVCSLWRDLIDVMTLWKRK) constitute an F-box domain. In terms of domain architecture, FBA spans 69 to 250 (FYILCSLQRN…VTNSSIIVSH (182 aa)). 5 positions are modified to phosphoserine: serine 249, serine 268, serine 275, serine 278, and serine 283.

In terms of assembly, part of a SCF (SKP1-cullin-F-box) protein ligase complex. Interacts with VCP, CHEK1 and CUL1.

Its subcellular location is the cytoplasm. Its pathway is protein modification; protein ubiquitination. Substrate-recognition component of some SCF (SKP1-CUL1-F-box protein)-type E3 ubiquitin ligase complexes. Involved in endoplasmic reticulum-associated degradation pathway (ERAD) for misfolded lumenal proteins by recognizing and binding sugar chains on unfolded glycoproteins that are retrotranslocated into the cytosol and promoting their ubiquitination and subsequent degradation. Able to recognize and bind denatured glycoproteins, which are modified with not only high-mannose but also complex-type oligosaccharides. Also recognizes sulfated glycans. Also involved in DNA damage response by specifically recognizing activated CHEK1 (phosphorylated on 'Ser-345'), promoting its ubiquitination and degradation. Ubiquitination of CHEK1 is required to ensure that activated CHEK1 does not accumulate as cells progress through S phase, or when replication forks encounter transient impediments during normal DNA replication. The protein is F-box only protein 6 (Fbxo6) of Rattus norvegicus (Rat).